Here is a 128-residue protein sequence, read N- to C-terminus: Sulfurtransferase TusD (128 aa).

The active-site Cysteine persulfide intermediate is C78.

The protein belongs to the DsrE/TusD family. As to quaternary structure, heterohexamer, formed by a dimer of trimers. The hexameric TusBCD complex contains 2 copies each of TusB, TusC and TusD. The TusBCD complex interacts with TusE.

Its subcellular location is the cytoplasm. Part of a sulfur-relay system required for 2-thiolation of 5-methylaminomethyl-2-thiouridine (mnm(5)s(2)U) at tRNA wobble positions. Accepts sulfur from TusA and transfers it in turn to TusE. The protein is Sulfurtransferase TusD of Salmonella typhi.